A 134-amino-acid polypeptide reads, in one-letter code: RuBisCO chaperone RbcX (134 aa).

The interval 97-134 (SNGNHRRSLLERLTQVDSSSTDQTEPNPGESDTSEDSE) is disordered. Over residues 111-122 (QVDSSSTDQTEP) the composition is skewed to polar residues.

This sequence belongs to the RbcX family. As to quaternary structure, homodimer (RbcX2). Interacts with the exposed C-terminal peptide of RbcL ('Glu-459-Asp-468'); binds 2 RbcL peptides per RbcX2, stapling them into an RbcL2 dimer. A slightly longer peptide binds with a higher affinity, but no long-term stable interaction with RbcL is detected. Contacts a second RbcL monomer via its peripheral polar surface.

The protein resides in the carboxysome. It is found in the cytoplasm. An RbcL-specific chaperone. Required for assembly of the RbcL8 core, acting downstream of the major chaperonin (GroEL-GroES). Acts on newly folded RbcL, has a transient dynamic interaction with RbcL and is eventually displaced by RbcS. The central cleft of the RbcX homodimer (RbcX2) binds the C-terminus of an RbcL monomer, stabilizing the C-terminus and probably preventing its reassociation with chaperonin GroEL-ES. At the same time the peripheral region of RbcX2 binds a second RbcL monomer, bridging the RbcL homodimers in the correct orientation. The RbcX2(2)-bound RbcL dimers then assemble into the RbcL8 core (RbcL8-(RbcX2)8). RbcS binding triggers the release of RbcX2. Required for optimal reconstitution of RuBisCO into its RbcL8S8 holoenzyme form upon expression of rbcL-rbcS subunits in E.coli, and probably also in situ. A frameshift mutation that replaces half the protein reduces accumulation of both RbcL and RbcS subunits and halves activity of RuBisCO in situ and in E.coli. In Picosynechococcus sp. (strain ATCC 27264 / PCC 7002 / PR-6) (Agmenellum quadruplicatum), this protein is RuBisCO chaperone RbcX.